The following is a 154-amino-acid chain: Egg-lysin (154 aa).

Positions 1-18 (MKLLVLCIFAMMATLAMS) are cleaved as a signal peptide.

Monomer. Homodimer. Molecules associate into dimers and then rapidly dissociate again. Interacts (as a monomer) with the egg vitelline layer protein VERL (via VERL repeats); each VERL chain can bind multiple copies of lysin. Sperm (at protein level).

Its subcellular location is the cytoplasmic vesicle. It localises to the secretory vesicle. The protein localises to the acrosome lumen. Creates a 3 um hole in the egg vitelline layer through which the sperm passes. Does not have enzyme activity. Species-specific interaction between the sperm protein lysin and the egg protein VERL exposes a basic surface on lysin that may dissociate the egg vitelline layer via electrostatic repulsion. Plays a role in ensuring species-specific fertilization. The sequence is that of Egg-lysin from Haliotis rufescens (California red abalone).